The sequence spans 51 residues: Sperm protamine P1 (51 aa).

This sequence belongs to the protamine P1 family. In terms of tissue distribution, testis.

The protein localises to the nucleus. It is found in the chromosome. Functionally, protamines substitute for histones in the chromatin of sperm during the haploid phase of spermatogenesis. They compact sperm DNA into a highly condensed, stable and inactive complex. The sequence is that of Sperm protamine P1 (PRM1) from Trachypithecus francoisi (Francois' leaf monkey).